The primary structure comprises 478 residues: Sulfate adenylyltransferase subunit 1 (478 aa).

In terms of domain architecture, tr-type G spans 24-240 (KSMLRFLTCG…VLEDIDIDAD (217 aa)). The interval 33–40 (GSVDDGKS) is G1. GTP is bound at residue 33-40 (GSVDDGKS). Positions 91–95 (GITID) are G2. Positions 112–115 (DTPG) are G3. GTP is bound by residues 112–116 (DTPGH) and 167–170 (NKMD). A G4 region spans residues 167–170 (NKMD). Residues 206–208 (SAL) are G5.

Belongs to the TRAFAC class translation factor GTPase superfamily. Classic translation factor GTPase family. CysN/NodQ subfamily. As to quaternary structure, heterodimer composed of CysD, the smaller subunit, and CysN.

It catalyses the reaction sulfate + ATP + H(+) = adenosine 5'-phosphosulfate + diphosphate. Its pathway is sulfur metabolism; hydrogen sulfide biosynthesis; sulfite from sulfate: step 1/3. Its function is as follows. With CysD forms the ATP sulfurylase (ATPS) that catalyzes the adenylation of sulfate producing adenosine 5'-phosphosulfate (APS) and diphosphate, the first enzymatic step in sulfur assimilation pathway. APS synthesis involves the formation of a high-energy phosphoric-sulfuric acid anhydride bond driven by GTP hydrolysis by CysN coupled to ATP hydrolysis by CysD. In Aliivibrio salmonicida (strain LFI1238) (Vibrio salmonicida (strain LFI1238)), this protein is Sulfate adenylyltransferase subunit 1.